A 243-amino-acid chain; its full sequence is Lectin-4 (243 aa).

Pyrrolidone carboxylic acid is present on Gln1. Residue Asn5 is glycosylated (N-linked (GlcNAc...) asparagine; in alpha chain). The N-linked (GlcNAc...) asparagine glycan is linked to Asn18. Glu129 and Asp131 together coordinate Mn(2+). Ca(2+) contacts are provided by Asp131, Trp133, Asn135, and Asp140. Residues Asp140 and His145 each coordinate Mn(2+).

It belongs to the leguminous lectin family. Homodimer of Alpha and Beta forms. Post-translationally, N-glycosylation of Asn-5 converts form Beta to form Alpha.

Lectin which has a strong affinity for both the Lewis b and y human blood-group determinants. This is Lectin-4 from Griffonia simplicifolia (Bandeiraea simplicifolia).